A 132-amino-acid polypeptide reads, in one-letter code: Small ribosomal subunit protein uS8c (132 aa).

It belongs to the universal ribosomal protein uS8 family. Part of the 30S ribosomal subunit.

It localises to the plastid. The protein localises to the chloroplast. Functionally, one of the primary rRNA binding proteins, it binds directly to 16S rRNA central domain where it helps coordinate assembly of the platform of the 30S subunit. The protein is Small ribosomal subunit protein uS8c (rps8) of Physcomitrium patens (Spreading-leaved earth moss).